The following is a 1205-amino-acid chain: MGNLKSVGQEPGPPCGLGLGLGLGLCGKQGPASPTSEPSRAPALAPPPSPPPAPDHSSPPLTRPPDGPKFPRVKNWEVGSITYDTLSAQSQQDGPCTPRRCLGSLVFPRKLQSRPSQNPAPPEQLLSQARDFISQYYSSIKRSGSQAHEQRLQEVEAEVAATGTYQLRESELVFGAKQAWRNAPRCVGRIQWGKLQVFDARDCSSAQEMFTYICNHIKYATNRGNLRSAITVFPQRASGRGDFRIWNSQLVRYAGYRQQDGSVRGDPANVEITELCIQHGWTPGNGRFDVLPLLLQAPDEPPELFALPPELVLEVPLEHPTLEWFAALGLRWYALPAVSNMLLEIGGLEFPAAPFSGWYMSTEIGTRNLCDPHRYNILEDVAVCMDLDTRTTSSLWKDKAAVEINLAVLHSYQLAKVTIVDHHAATASFMKHLENEQKARGGCPADWAWIVPPISGSLTPVFHQEMVNYVLSPAFRYQTDPWKGSASKGAGVTRKKTFKEVANAVKISASLMGTVMAKRVKATILYGSETGRAQSYAQQLGRLFRKAFDPRVLCMDEYDVVSLEHETLVLVVTSTFGNGDPPENGESFAAALMEMSGSYNSSPRPEQHKSYKIRFNSVSCSDPLVSSWRRKRKESRNTDSAGALGTLRFCVFGLGSRAYPHFCAFARAVDTRLEELGGERLLQLGQGDELCGQEEAFGGWAQAAFQASWETFCVGEDAKAAARDIFSPKRTWKRQRYRLSAQAEGLQLLPGLIHVHRRKMVQATVLAVENLQSSKSTRATILVRLDTGSQEALQYQPGDHIGICPPNRPGLVEALLSRVEDPPPPGEPVAVEQLEKGSPGGPPPSWVRDPRLPPCTLRQALTFFLDITSPPSPQLLRLLSTLAEESSEQQELESLSQDPRRYEEWKWFRCPTLLEVLEQFPSVALPAPLLLTQLPLLQPRYYSVSSAPSAHPGEIHLTVAVLAYRTQDGLGPLHYGVCSTWLSQLKAGDPVPCFIRGAPSFRLPPDPSLPCILVGPGTGIAPFRGFWQGRLHDIYSKGLQPAPMTLVFGCRCSQLDHLYRDEVQDAQQRGVFGRVLTAFSREPDSPKTYVQDILRTELAAEVHRVLCLERGHMFVCGDVTMATSVLQTVQRILATEGDMELDEAGDVIGVLRDQQRYHEDIFGLTLRTQEVTSRIRTQSFSLQERHLRGAVPWALDPPGPDTVGP.

The disordered stretch occupies residues 1–73 (MGNLKSVGQE…PPDGPKFPRV (73 aa)). A lipid anchor (N-myristoyl glycine) is attached at G2. 2 S-palmitoyl cysteine lipidation sites follow: C15 and C26. Over residues 15 to 27 (CGLGLGLGLGLCG) the composition is skewed to gly residues. Positions 44–54 (LAPPPSPPPAP) are enriched in pro residues. Residues C96 and C101 each coordinate Zn(2+). An interaction with NOSIP region spans residues 100–488 (RCLGSLVFPR…TDPWKGSASK (389 aa)). S104 serves as a coordination point for (6R)-L-erythro-5,6,7,8-tetrahydrobiopterin. S116 is subject to Phosphoserine; by CDK5. C186 lines the heme b pocket. 5 residues coordinate L-arginine: Q249, W358, Y359, E363, and N368. (6R)-L-erythro-5,6,7,8-tetrahydrobiopterin-binding residues include A448, W449, and F462. Y477 is a heme b binding site. Residues 492 to 512 (VTRKKTFKEVANAVKISASLM) are calmodulin-binding. Residue T497 is modified to Phosphothreonine; by AMPK. Residues 522–705 (ATILYGSETG…AFGGWAQAAF (184 aa)) form the Flavodoxin-like domain. 6 residues coordinate FMN: S528, E529, T530, R532, S574, and T575. Phosphoserine is present on residues S617, S635, and S640. Residues S656, C663, E689, and Q693 each contribute to the FMN site. Residues 758–1004 (RKMVQATVLA…IRGAPSFRLP (247 aa)) form the FAD-binding FR-type domain. NADP(+) is bound at residue R778. An FAD-binding site is contributed by H800. Residues 819-850 (VEDPPPPGEPVAVEQLEKGSPGGPPPSWVRDP) are disordered. At S838 the chain carries Phosphoserine. Residues R940, Y942, S943, T958, A960, Y964, V977, C978, and S979 each coordinate FAD. The NADP(+) site is built by T1018, R1051, S1080, R1081, K1087, Y1089, and Q1091. Position 1177 is a phosphothreonine (T1177). S1179 bears the Phosphoserine; by AMPK mark. S1181 carries the phosphoserine modification.

The protein belongs to the NOS family. As to quaternary structure, homodimer. Interacts with NOSIP and NOSTRIN. Interacts with HSP90AB1. Forms a complex with ASL, ASS1 and SLC7A1; the complex regulates cell-autonomous L-arginine synthesis and citrulline recycling while channeling extracellular L-arginine to nitric oxide synthesis pathway. Requires heme b as cofactor. FAD is required as a cofactor. The cofactor is FMN. It depends on (6R)-L-erythro-5,6,7,8-tetrahydrobiopterin as a cofactor. In terms of processing, phosphorylation by AMPK at Ser-1179 in the presence of Ca(2+)-calmodulin (CaM) activates activity. In absence of Ca(2+)-calmodulin, AMPK also phosphorylates Thr-497, resulting in inhibition of activity. Phosphorylation of Ser-116 by CDK5 reduces activity.

Its subcellular location is the membrane. The protein resides in the caveola. The protein localises to the cytoplasm. It localises to the cytoskeleton. It is found in the golgi apparatus. Its subcellular location is the cell membrane. It carries out the reaction 2 L-arginine + 3 NADPH + 4 O2 + H(+) = 2 L-citrulline + 2 nitric oxide + 3 NADP(+) + 4 H2O. With respect to regulation, stimulated by calcium/calmodulin. Inhibited by NOSIP and NOSTRIN. In terms of biological role, produces nitric oxide (NO) which is implicated in vascular smooth muscle relaxation through a cGMP-mediated signal transduction pathway. NO mediates vascular endothelial growth factor (VEGF)-induced angiogenesis in coronary vessels and promotes blood clotting through the activation of platelets. This chain is Nitric oxide synthase 3 (NOS3), found in Canis lupus familiaris (Dog).